A 357-amino-acid chain; its full sequence is Mating-type protein MAT-1 (357 aa).

Positions 53-108 form a DNA-binding region, alpha box; that stretch reads RAKRPLNAFMAFRTYYLKLFPDTQQKNASGFLTQLWGGDPHRNKWALIAKVYSFLR.

Belongs to the MATALPHA1 family.

It localises to the nucleus. Mating type proteins are sequence specific DNA-binding proteins that act as master switches in fungal differentiation by controlling gene expression in a cell type-specific fashion. Transcriptional activator that induces the transcription of alpha-specific genes. This is Mating-type protein MAT-1 (MAT1) from Fusarium oxysporum (Fusarium vascular wilt).